The primary structure comprises 570 residues: Dwarfin sma-4 (570 aa).

The tract at residues 115-134 (SSQASSQPPPTPTVNPTPIP) is disordered. Residues 121–134 (QPPPTPTVNPTPIP) show a composition bias toward pro residues. One can recognise an MH1 domain in the interval 150-273 (QISHVLQCYQ…YERVVSNRIT (124 aa)). Positions 203, 247, 258, and 263 each coordinate Zn(2+). The region spanning 350–570 (WCSIIYYELD…LKNSSQFGSS (221 aa)) is the MH2 domain.

Belongs to the dwarfin/SMAD family.

The protein resides in the cytoplasm. The protein localises to the nucleus. Functionally, involved in TGF-beta pathway. The polypeptide is Dwarfin sma-4 (sma-4) (Caenorhabditis elegans).